Here is a 315-residue protein sequence, read N- to C-terminus: Ribosomal RNA small subunit methyltransferase H (315 aa).

S-adenosyl-L-methionine is bound by residues 32–34 (GGH), Asp52, Phe78, Asp100, and Gln107.

This sequence belongs to the methyltransferase superfamily. RsmH family.

The protein localises to the cytoplasm. The catalysed reaction is cytidine(1402) in 16S rRNA + S-adenosyl-L-methionine = N(4)-methylcytidine(1402) in 16S rRNA + S-adenosyl-L-homocysteine + H(+). Functionally, specifically methylates the N4 position of cytidine in position 1402 (C1402) of 16S rRNA. This chain is Ribosomal RNA small subunit methyltransferase H, found in Psychromonas ingrahamii (strain DSM 17664 / CCUG 51855 / 37).